A 199-amino-acid polypeptide reads, in one-letter code: NAD(P)H dehydrogenase (quinone) (199 aa).

A Flavodoxin-like domain is found at 4–190 (VLVLYYSAYG…AGARYQGRRV (187 aa)). FMN-binding positions include 10 to 15 (SAYGHI) and 78 to 80 (TRF). An NAD(+)-binding site is contributed by Tyr-12. Trp-98 contacts substrate. FMN-binding positions include 113 to 119 (STATQHG) and His-134.

The protein belongs to the WrbA family. It depends on FMN as a cofactor.

It catalyses the reaction a quinone + NADH + H(+) = a quinol + NAD(+). The catalysed reaction is a quinone + NADPH + H(+) = a quinol + NADP(+). The sequence is that of NAD(P)H dehydrogenase (quinone) from Methylocella silvestris (strain DSM 15510 / CIP 108128 / LMG 27833 / NCIMB 13906 / BL2).